The sequence spans 565 residues: Anaphase-promoting complex subunit 7 (565 aa).

10 TPR repeats span residues 101-134 (EIEVKYKMAECYTMLKQDKDAIAILDGIPSRQRT), 169-202 (LDAILGLLSLSVKGAEVASMTMNVIQTVPNLDWL), 203-236 (SVWIKAYAFVHTGDNSRAISTICSLEKKSLLRDN), 237-270 (VDLLGSLADLYFRAGDNKNSVLKFEQAQMLDPYL), 339-372 (VQALLLKGAALRNMGRVQEAIIHFREAIRLAPCR), 373-406 (LDCYEGLIECYLASNSIREAMVMANNVYKTLGAN), 407-441 (AQTLTLLATVCLEDPVTQEKAKTLLDKALTQRPDY), 442-474 (IKAVVKKAELLSREQKYEDGIALLRNALANQSD), 475-508 (CVLHRILGDFLVAVNEYQEAMDQYSIALSLDPND), and 509-531 (QKSLEGMQKMEKEESPTDATQEE). Lysine 229 bears the N6-acetyllysine mark. Basic and acidic residues predominate over residues 513-523 (EGMQKMEKEES). Positions 513–565 (EGMQKMEKEESPTDATQEEDVDDMEGSGEEGDLEGSDSEAAQWADQEQWFGMQ) are disordered. A compositionally biased stretch (acidic residues) spans 528–549 (TQEEDVDDMEGSGEEGDLEGSD).

The protein belongs to the APC7 family. V-shaped homodimer. The mammalian APC/C is composed at least of 14 distinct subunits ANAPC1, ANAPC2, CDC27/APC3, ANAPC4, ANAPC5, CDC16/APC6, ANAPC7, CDC23/APC8, ANAPC10, ANAPC11, CDC26/APC12, ANAPC13, ANAPC15 and ANAPC16 that assemble into a complex of at least 19 chains with a combined molecular mass of around 1.2 MDa; APC/C interacts with FZR1 and FBXO5.

It localises to the cytoplasm. It is found in the cytoskeleton. The protein resides in the nucleus. Its subcellular location is the spindle. Its pathway is protein modification; protein ubiquitination. Functionally, component of the anaphase promoting complex/cyclosome (APC/C), a cell cycle-regulated E3 ubiquitin ligase that controls progression through mitosis and the G1 phase of the cell cycle. The APC/C complex acts by mediating ubiquitination and subsequent degradation of target proteins: it mainly mediates the formation of 'Lys-11'-linked polyubiquitin chains and, to a lower extent, the formation of 'Lys-48'- and 'Lys-63'-linked polyubiquitin chains. The APC/C complex catalyzes assembly of branched 'Lys-11'-/'Lys-48'-linked branched ubiquitin chains on target proteins. APC7 is not required for the assembly of the APC/C complex, but has an enzyme-substrate adapter activity mediating the processive ubiquitination of specific substrates. Involved in brain development through the specific ubiquitination and clearance of MKI67 from constitutive heterochromatin after neuronal progenitors exit mitosis. The polypeptide is Anaphase-promoting complex subunit 7 (Homo sapiens (Human)).